We begin with the raw amino-acid sequence, 117 residues long: Large ribosomal subunit protein uL22 (117 aa).

Belongs to the universal ribosomal protein uL22 family. Part of the 50S ribosomal subunit.

This protein binds specifically to 23S rRNA; its binding is stimulated by other ribosomal proteins, e.g. L4, L17, and L20. It is important during the early stages of 50S assembly. It makes multiple contacts with different domains of the 23S rRNA in the assembled 50S subunit and ribosome. Its function is as follows. The globular domain of the protein is located near the polypeptide exit tunnel on the outside of the subunit, while an extended beta-hairpin is found that lines the wall of the exit tunnel in the center of the 70S ribosome. The protein is Large ribosomal subunit protein uL22 of Latilactobacillus sakei subsp. sakei (strain 23K) (Lactobacillus sakei subsp. sakei).